The chain runs to 250 residues: Tetrahydromethanopterin S-methyltransferase subunit D (250 aa).

6 helical membrane-spanning segments follow: residues 9-29, 47-67, 86-106, 144-164, 184-204, and 230-250; these read IIWM…VHFV, GTVQ…GFMM, IMIA…VGVV, IIGG…LIEV, LVAV…VIPS, and LVAS…LGGI.

It belongs to the MtrD family. In terms of assembly, the complex is composed of 8 subunits; MtrA, MtrB, MtrC, MtrD, MtrE, MtrF, MtrG and MtrH.

Its subcellular location is the cell membrane. It catalyses the reaction 5-methyl-5,6,7,8-tetrahydromethanopterin + coenzyme M + 2 Na(+)(in) = 5,6,7,8-tetrahydromethanopterin + methyl-coenzyme M + 2 Na(+)(out). It participates in one-carbon metabolism; methanogenesis from CO(2); methyl-coenzyme M from 5,10-methylene-5,6,7,8-tetrahydromethanopterin: step 2/2. Functionally, part of a complex that catalyzes the formation of methyl-coenzyme M and tetrahydromethanopterin from coenzyme M and methyl-tetrahydromethanopterin. This is an energy-conserving, sodium-ion translocating step. The protein is Tetrahydromethanopterin S-methyltransferase subunit D of Methanosarcina barkeri (strain Fusaro / DSM 804).